The primary structure comprises 989 residues: Putative transcription elongation factor SPT5 homolog 2 (989 aa).

Positions 1 to 26 are enriched in acidic residues; the sequence is MSQYSDDDYSHEDDSEMEDEDEEDEY. The disordered stretch occupies residues 1–82; sequence MSQYSDDDYS…VEDDDDDVDV (82 aa). A compositionally biased stretch (basic residues) spans 31-42; the sequence is SRKGRSGKKRGR. Acidic residues predominate over residues 65–82; the sequence is WEVEVDDDVEDDDDDVDV. KOW domains lie at 260–287, 412–439, 464–491, 588–615, and 683–710; these read DLSR…VDNV, HFMK…VDEE, YFEP…VDQH, VVAV…IYKG, and DHLV…VKDK. The interval 790 to 852 is disordered; it reads MSPPRDNWED…SPMTPSSTSY (63 aa). A compositionally biased stretch (low complexity) spans 842–852; the sequence is PSPMTPSSTSY. Residues 936–963 form the KOW 6 domain; the sequence is CPKKNERVKILGGKYCGSTAKVIGEDGQ.

Belongs to the SPT5 family.

The protein localises to the nucleus. May regulate transcription elongation by RNA polymerase II. May enhance transcriptional pausing at sites proximal to the promoter, which may in turn facilitate the assembly of an elongation competent RNA polymerase II complex. This is Putative transcription elongation factor SPT5 homolog 2 from Arabidopsis thaliana (Mouse-ear cress).